Here is a 134-residue protein sequence, read N- to C-terminus: UPF0412 protein YaaI (134 aa).

An N-terminal signal peptide occupies residues 1-23 (MKSVFTLSASLAISLLLCCTAQA).

Belongs to the UPF0412 family.

The chain is UPF0412 protein YaaI from Escherichia coli O7:K1 (strain IAI39 / ExPEC).